A 562-amino-acid chain; its full sequence is AT-rich interactive domain-containing protein 1 (562 aa).

In terms of domain architecture, ARID spans 43–136; sequence KELISLFRPL…YLDAFGRWLN (94 aa). Residues 358–448 enclose the ELM2 domain; it reads PCALVGSKFQ…KLELGPAFYM (91 aa).

The protein resides in the nucleus. In Arabidopsis thaliana (Mouse-ear cress), this protein is AT-rich interactive domain-containing protein 1 (ARID1).